Consider the following 199-residue polypeptide: 7-methyl-GTP pyrophosphatase (199 aa).

Aspartate 76 acts as the Proton acceptor in catalysis.

The protein belongs to the Maf family. YceF subfamily. Requires a divalent metal cation as cofactor.

The protein resides in the cytoplasm. It catalyses the reaction N(7)-methyl-GTP + H2O = N(7)-methyl-GMP + diphosphate + H(+). Nucleoside triphosphate pyrophosphatase that hydrolyzes 7-methyl-GTP (m(7)GTP). May have a dual role in cell division arrest and in preventing the incorporation of modified nucleotides into cellular nucleic acids. The protein is 7-methyl-GTP pyrophosphatase of Rhizobium johnstonii (strain DSM 114642 / LMG 32736 / 3841) (Rhizobium leguminosarum bv. viciae).